Reading from the N-terminus, the 578-residue chain is Thrombomodulin (578 aa).

The signal sequence occupies residues 1–16; the sequence is MLRVLLLGVLAPAGLG. The Extracellular segment spans residues 17–518; the sequence is LPTPAQPQPR…SPSPVGPVHS (502 aa). In terms of domain architecture, C-type lectin spans 31–167; sequence MEHDCFQLFR…CAAEADGFLC (137 aa). N-linked (GlcNAc...) asparagine glycosylation occurs at Asn-114. Cystine bridges form between Cys-137-Cys-158, Cys-246-Cys-257, Cys-253-Cys-266, Cys-268-Cys-281, Cys-289-Cys-297, Cys-293-Cys-309, Cys-311-Cys-324, Cys-330-Cys-341, Cys-337-Cys-350, Cys-352-Cys-363, Cys-370-Cys-379, Cys-375-Cys-389, Cys-391-Cys-405, Cys-409-Cys-414, Cys-418-Cys-426, Cys-428-Cys-440, Cys-446-Cys-455, Cys-451-Cys-464, and Cys-466-Cys-480. 2 consecutive EGF-like domains span residues 242 to 282 and 285 to 325; these read GAWD…RSCA and AEHS…HRCE. The N-linked (GlcNAc...) asparagine glycan is linked to Asn-300. Residues 326–364 enclose the EGF-like 3; calcium-binding domain; sequence DVDDCIQVPSLCPQLCVNTRGAFECHCYPGYELVDNECV. At Asn-343 the chain carries (3R)-3-hydroxyasparagine. EGF-like domains are found at residues 366–406 and 405–441; these read PVDP…HRCQ and CQMF…FMCT. Asn-410 is a glycosylation site (N-linked (GlcNAc...) asparagine). In terms of domain architecture, EGF-like 6; calcium-binding spans 442 to 481; sequence DIDECENGECPEACRNLPGTYECICGPDSPLAGQVATDCG. The segment at 483-512 is disordered; it reads IISDPDGDSDSGSGEPPVTPTPGVTPSPSP. Residues Ser-493 and Ser-495 are each glycosylated (O-linked (Xyl...) (chondroitin sulfate) serine). A compositionally biased stretch (pro residues) spans 499–512; that stretch reads PVTPTPGVTPSPSP. The chain crosses the membrane as a helical span at residues 519 to 539; that stretch reads GVLIGISIASLSLVVALLALL. The Cytoplasmic portion of the chain corresponds to 540-578; sequence CHLRKKQGAPRAELEYKCGAPAKEVVLQHVRTEQMPQKL.

In terms of assembly, interacts with ITGAL, ITGAM and ITGB2. Interacts with thrombin/F2; this interaction switches the specificity of thrombin from a procoagulant to an anticoagulant and antifibrinolytic protease. Interacts with ANGP1 and ANGP2; these interactions significantly inhibit the generation of activated PC and TAFIa/CPB2 by the thrombin/thrombomodulin complex. Interacts with PF4; this interaction enhances generation of activated protein C. Interacts with HMGB1; this interaction inhibits HMGB1 inflammatory activity. Post-translationally, N-glycosylated. In terms of processing, the iron and 2-oxoglutarate dependent 3-hydroxylation of aspartate and asparagine is (R) stereospecific within EGF domains. As to expression, expressed in lung, liver, spleen, kidney, pancreas and lymph node. Low expression in heart, cerebrum, urinary bladder and uterus.

It is found in the membrane. Endothelial cell receptor that plays a critical role in regulating several physiological processes including hemostasis, coagulation, fibrinolysis, inflammation, and angiogenesis. Acts as a cofactor for thrombin activation of protein C/PROC on the surface of vascular endothelial cells leading to initiation of the activated protein C anticoagulant pathway. Also accelerates the activation of the plasma carboxypeptidase B2/CPB2, which catalyzes removal of C-terminal basic amino acids from its substrates including kinins or anaphylatoxins leading to fibrinolysis inhibition. Plays critical protective roles in changing the cleavage specificity of protease-activated receptor 1/PAR1, inhibiting endothelial cell permeability and inflammation. Suppresses inflammation distinctly from its anticoagulant cofactor activity by sequestering HMGB1 thereby preventing it from engaging cellular receptors such as RAGE and contributing to the inflammatory response. In Canis lupus familiaris (Dog), this protein is Thrombomodulin (THBD).